The sequence spans 219 residues: Orotate phosphoribosyltransferase (219 aa).

Lys26 provides a ligand contact to 5-phospho-alpha-D-ribose 1-diphosphate. 34-35 serves as a coordination point for orotate; that stretch reads FF. Residues 72 to 73, Arg98, Lys99, Lys102, His104, and 124 to 132 each bind 5-phospho-alpha-D-ribose 1-diphosphate; these read YK and DDVITAGTA. Orotate-binding residues include Thr128 and Arg156.

It belongs to the purine/pyrimidine phosphoribosyltransferase family. PyrE subfamily. Homodimer. It depends on Mg(2+) as a cofactor.

It carries out the reaction orotidine 5'-phosphate + diphosphate = orotate + 5-phospho-alpha-D-ribose 1-diphosphate. The protein operates within pyrimidine metabolism; UMP biosynthesis via de novo pathway; UMP from orotate: step 1/2. Functionally, catalyzes the transfer of a ribosyl phosphate group from 5-phosphoribose 1-diphosphate to orotate, leading to the formation of orotidine monophosphate (OMP). This chain is Orotate phosphoribosyltransferase, found in Xylella fastidiosa (strain M23).